The chain runs to 111 residues: Flagellar hook-basal body complex protein FliE (111 aa).

Belongs to the FliE family.

The protein localises to the bacterial flagellum basal body. This chain is Flagellar hook-basal body complex protein FliE, found in Clostridium acetobutylicum (strain ATCC 824 / DSM 792 / JCM 1419 / IAM 19013 / LMG 5710 / NBRC 13948 / NRRL B-527 / VKM B-1787 / 2291 / W).